The primary structure comprises 41 residues: Submaxillary gland androgen-regulated protein 2, isoform beta (41 aa).

An N-terminal signal peptide occupies residues 1–22 (MKALYMVFVLWVLIGCFLRLLK).

It is found in the secreted. In terms of biological role, may play a role in protection or detoxification. This Mus musculus (Mouse) protein is Submaxillary gland androgen-regulated protein 2, isoform beta (Smr2).